A 166-amino-acid polypeptide reads, in one-letter code: Large ribosomal subunit protein uL10 (166 aa).

The protein belongs to the universal ribosomal protein uL10 family. As to quaternary structure, part of the ribosomal stalk of the 50S ribosomal subunit. The N-terminus interacts with L11 and the large rRNA to form the base of the stalk. The C-terminus forms an elongated spine to which L12 dimers bind in a sequential fashion forming a multimeric L10(L12)X complex.

Functionally, forms part of the ribosomal stalk, playing a central role in the interaction of the ribosome with GTP-bound translation factors. This chain is Large ribosomal subunit protein uL10, found in Marinomonas sp. (strain MWYL1).